A 377-amino-acid chain; its full sequence is Succinyl-diaminopimelate desuccinylase (377 aa).

Histidine 67 is a Zn(2+) binding site. Aspartate 69 is a catalytic residue. Aspartate 100 contacts Zn(2+). Glutamate 134 (proton acceptor) is an active-site residue. Glutamate 135, glutamate 163, and histidine 349 together coordinate Zn(2+).

Belongs to the peptidase M20A family. DapE subfamily. As to quaternary structure, homodimer. It depends on Zn(2+) as a cofactor. Co(2+) serves as cofactor.

The enzyme catalyses N-succinyl-(2S,6S)-2,6-diaminopimelate + H2O = (2S,6S)-2,6-diaminopimelate + succinate. The protein operates within amino-acid biosynthesis; L-lysine biosynthesis via DAP pathway; LL-2,6-diaminopimelate from (S)-tetrahydrodipicolinate (succinylase route): step 3/3. In terms of biological role, catalyzes the hydrolysis of N-succinyl-L,L-diaminopimelic acid (SDAP), forming succinate and LL-2,6-diaminopimelate (DAP), an intermediate involved in the bacterial biosynthesis of lysine and meso-diaminopimelic acid, an essential component of bacterial cell walls. The chain is Succinyl-diaminopimelate desuccinylase from Actinobacillus pleuropneumoniae serotype 3 (strain JL03).